Consider the following 310-residue polypeptide: Putative HTH-type transcriptional regulatory protein SSO0942 (310 aa).

The HTH cro/C1-type domain occupies 125–180 (LKHKREEMGYSIGDVAKFLGVSRKAIYDYEKGDSDVSLEVAEKLIDLFGDDIIGDV). Positions 136–155 (IGDVAKFLGVSRKAIYDYEK) form a DNA-binding region, H-T-H motif.

This is Putative HTH-type transcriptional regulatory protein SSO0942 from Saccharolobus solfataricus (strain ATCC 35092 / DSM 1617 / JCM 11322 / P2) (Sulfolobus solfataricus).